We begin with the raw amino-acid sequence, 89 residues long: UPF0213 protein LSEI_1587 (89 aa).

Positions 4–79 constitute a GIY-YIG domain; sequence KTYYFYVLLC…KHQTRHRKEV (76 aa).

Belongs to the UPF0213 family.

The protein is UPF0213 protein LSEI_1587 of Lacticaseibacillus paracasei (strain ATCC 334 / BCRC 17002 / CCUG 31169 / CIP 107868 / KCTC 3260 / NRRL B-441) (Lactobacillus paracasei).